The following is a 337-amino-acid chain: Casein kinase I isoform alpha (337 aa).

Residues 17-285 (YKLVRKIGSG…YLRQLFRILF (269 aa)) form the Protein kinase domain. ATP is bound by residues 23–31 (IGSGSFGDI) and Lys46. Catalysis depends on Asp136, which acts as the Proton acceptor. Residues 309–325 (AASSSGQGQQAQTPTGK) show a composition bias toward low complexity. The disordered stretch occupies residues 309–337 (AASSSGQGQQAQTPTGKQTDKSKSNMKGF).

It belongs to the protein kinase superfamily. CK1 Ser/Thr protein kinase family. Casein kinase I subfamily. In terms of processing, autophosphorylated.

It localises to the cytoplasm. The protein resides in the cytoskeleton. The protein localises to the microtubule organizing center. It is found in the centrosome. Its subcellular location is the chromosome. It localises to the centromere. The protein resides in the kinetochore. The protein localises to the nucleus speckle. It is found in the cilium basal body. Its subcellular location is the spindle. The enzyme catalyses L-seryl-[protein] + ATP = O-phospho-L-seryl-[protein] + ADP + H(+). It carries out the reaction L-threonyl-[protein] + ATP = O-phospho-L-threonyl-[protein] + ADP + H(+). In terms of biological role, casein kinases are operationally defined by their preferential utilization of acidic proteins such as caseins as substrates. It can phosphorylate a large number of proteins. Participates in Wnt signaling. May play a role in segregating chromosomes during mitosis. May play a role in keratin cytoskeleton disassembly. In Gallus gallus (Chicken), this protein is Casein kinase I isoform alpha (CSNK1A1).